Consider the following 1402-residue polypeptide: Phospholipid-transporting ATPase dnf2 (1402 aa).

A run of 4 helical transmembrane segments spans residues 109–129, 135–155, 457–477, and 501–521; these read FQNVANLFFLFLVILQSISIF, PGLAAVPLIVVVGITAVKDAI, LNFIILFSMCFVCAVVEGIAW, and VVTFFTGVILFQNLVPISLYI. Asp569 functions as the 4-aspartylphosphate intermediate in the catalytic mechanism. ATP is bound by residues Asp569, Lys570, Thr571, Glu700, Phe741, Ser743, Lys746, Lys764, Arg799, Thr800, Thr879, Gly880, Asp881, Arg986, and Lys992. A Mg(2+)-binding site is contributed by Asp569. Mg(2+) is bound at residue Thr571. Asp1012 serves as a coordination point for Mg(2+). Positions 1015 and 1016 each coordinate ATP. Position 1016 (Asp1016) interacts with Mg(2+). A run of 6 helical transmembrane segments spans residues 1066-1086, 1101-1121, 1151-1171, 1193-1213, 1218-1238, and 1260-1280; these read VAEMVNNFFYKSVVWTFTLFW, YTYVMLFNLIFSSLPVIVMGV, IFIGYMLDGFYQSVICFFFSF, LGVYVAAPTIMVVDTYVILNQ, VFSIGLWALSCLTFWFWTGVY, and FWAVLCGTIVSCLFPKFLFMT. Position 1275 (Lys1275) interacts with a 1,2-diacyl-sn-glycero-3-phospho-L-serine.

Belongs to the cation transport ATPase (P-type) (TC 3.A.3) family. Type IV subfamily. Requires Mg(2+) as cofactor.

The protein resides in the cell membrane. Its subcellular location is the endoplasmic reticulum membrane. The catalysed reaction is ATP + H2O + phospholipidSide 1 = ADP + phosphate + phospholipidSide 2.. The enzyme catalyses a 1,2-diacyl-sn-glycero-3-phosphoethanolamine(out) + ATP + H2O = a 1,2-diacyl-sn-glycero-3-phosphoethanolamine(in) + ADP + phosphate + H(+). It catalyses the reaction a 1,2-diacyl-sn-glycero-3-phosphocholine(out) + ATP + H2O = a 1,2-diacyl-sn-glycero-3-phosphocholine(in) + ADP + phosphate + H(+). It carries out the reaction a beta-D-glucosyl-(1&lt;-&gt;1')-N-acylsphing-4-enine(out) + ATP + H2O = a beta-D-glucosyl-(1&lt;-&gt;1')-N-acylsphing-4-enine(in) + ADP + phosphate + H(+). The catalysed reaction is a 1,2-diacyl-sn-glycero-3-phospho-L-serine(out) + ATP + H2O = a 1,2-diacyl-sn-glycero-3-phospho-L-serine(in) + ADP + phosphate + H(+). In terms of biological role, catalytic component of a P4-ATPase flippase complex which catalyzes the hydrolysis of ATP coupled to the transport of glucosylceramide, phosphatidylcholine, phosphatidylethanolamine, and small amounts of phosphatidylserine from the lumenal to the cytosolic leaflet of the cell membrane and ensures the maintenance of asymmetric distribution of phospholipids. The sequence is that of Phospholipid-transporting ATPase dnf2 from Schizosaccharomyces pombe (strain 972 / ATCC 24843) (Fission yeast).